Consider the following 249-residue polypeptide: General transcription factor IIF subunit 2 (249 aa).

An N-acetylalanine modification is found at Ala-2. N6-acetyllysine occurs at positions 22, 33, and 137. Ser-142 bears the Phosphoserine mark. Residues Gly-227 and His-229 each coordinate DNA. Ser-248 carries the post-translational modification Phosphoserine.

Belongs to the TFIIF beta subunit family. As to quaternary structure, heterodimer of an alpha and a beta subunit. Interacts with HTATSF1 and GPBP1. Interacts with URI1. Interacts with GTF2B (via N-terminus); this interaction is inhibited in presence of GTF2F1. Part of TBP-based Pol II pre-initiation complex (PIC), in which Pol II core assembles with general transcription factors and other specific initiation factors including GTF2E1, GTF2E2, GTF2F1, GTF2F2, TCEA1, ERCC2, ERCC3, GTF2H2, GTF2H3, GTF2H4, GTF2H5, GTF2A1, GTF2A2, GTF2B and TBP; this large multi-subunit PIC complex mediates DNA unwinding and targets Pol II core to the transcription start site where the first phosphodiester bond forms.

It is found in the nucleus. Functionally, TFIIF is a general transcription initiation factor that binds to RNA polymerase II and helps to recruit it to the initiation complex in collaboration with TFIIB. This is General transcription factor IIF subunit 2 (GTF2F2) from Bos taurus (Bovine).